The primary structure comprises 377 residues: Cobalt-precorrin-5B C(1)-methyltransferase (377 aa).

It belongs to the CbiD family.

The catalysed reaction is Co-precorrin-5B + S-adenosyl-L-methionine = Co-precorrin-6A + S-adenosyl-L-homocysteine. Its pathway is cofactor biosynthesis; adenosylcobalamin biosynthesis; cob(II)yrinate a,c-diamide from sirohydrochlorin (anaerobic route): step 6/10. Functionally, catalyzes the methylation of C-1 in cobalt-precorrin-5B to form cobalt-precorrin-6A. This chain is Cobalt-precorrin-5B C(1)-methyltransferase, found in Alkaliphilus metalliredigens (strain QYMF).